The primary structure comprises 119 residues: Large ribosomal subunit protein bL20 (119 aa).

It belongs to the bacterial ribosomal protein bL20 family.

Functionally, binds directly to 23S ribosomal RNA and is necessary for the in vitro assembly process of the 50S ribosomal subunit. It is not involved in the protein synthesizing functions of that subunit. This is Large ribosomal subunit protein bL20 from Streptococcus thermophilus (strain ATCC BAA-491 / LMD-9).